The sequence spans 290 residues: 33 kDa chaperonin (290 aa).

2 disulfide bridges follow: C231–C233 and C264–C267.

The protein belongs to the HSP33 family. Under oxidizing conditions two disulfide bonds are formed involving the reactive cysteines. Under reducing conditions zinc is bound to the reactive cysteines and the protein is inactive.

Its subcellular location is the cytoplasm. Functionally, redox regulated molecular chaperone. Protects both thermally unfolding and oxidatively damaged proteins from irreversible aggregation. Plays an important role in the bacterial defense system toward oxidative stress. The protein is 33 kDa chaperonin of Photorhabdus laumondii subsp. laumondii (strain DSM 15139 / CIP 105565 / TT01) (Photorhabdus luminescens subsp. laumondii).